We begin with the raw amino-acid sequence, 1149 residues long: Probable phospholipid-transporting ATPase IA (1149 aa).

Over 1–65 (MPTMRRTVSE…TAKYNIITFL (65 aa)) the chain is Cytoplasmic. At Ser-25 the chain carries Phosphoserine. Phosphothreonine is present on Thr-28. Position 29 is a phosphoserine (Ser-29). A helical transmembrane segment spans residues 66 to 86 (PRFLYSQFRRAANSFFLFIAL). Residues 87–92 (LQQIPD) are Extracellular-facing. The chain crosses the membrane as a helical span at residues 93–115 (VSPTGRYTTLVPLLFILAVAAIK). The Cytoplasmic segment spans residues 116 to 297 (EIIEDIKRHK…SNVERITNVQ (182 aa)). The helical transmembrane segment at 298 to 319 (ILILFCILIAMSLVCSVGSAIW) threads the bilayer. Residues 320 to 344 (NRRHSGRDWYLNLNYGGANNFGLNF) are Extracellular-facing. Residues 345–366 (LTFIILFNNLIPISLLVTLEVV) traverse the membrane as a helical segment. The Cytoplasmic portion of the chain corresponds to 367 to 842 (KFTQAYFINW…GAWNYNRGSK (476 aa)). The 4-aspartylphosphate intermediate role is filled by Asp-409. ATP contacts are provided by residues Asp-409, Lys-410, Thr-411, Glu-493, Phe-534, Lys-557, Arg-590, Thr-670, Gly-671, Asp-672, 726–733 (ALIIDGKT), Arg-760, and Lys-766. Asp-409 is a binding site for Mg(2+). A Mg(2+)-binding site is contributed by Thr-411. Asp-786 lines the Mg(2+) pocket. ATP contacts are provided by Asn-789 and Asp-790. A Mg(2+)-binding site is contributed by Asp-790. Residues 843 to 863 (CILYCFYKNIVLYIIEIWFAF) form a helical membrane-spanning segment. The Extracellular segment spans residues 864 to 875 (VNGFSGQILFER). Residues 876–895 (WCIGLYNVMFTAMPPLTLGI) form a helical membrane-spanning segment. The Cytoplasmic segment spans residues 896 to 925 (FERSCRKEYMLKYPELYKTSQNALDFNTKV). A helical transmembrane segment spans residues 926 to 947 (FWVHCLNGLFHSVILFWFPLKA). Over 948–961 (LQYGTVFENGRTSD) the chain is Extracellular. Residues 962 to 984 (YLLLGNFVYTFVVITVCLKAGLE) traverse the membrane as a helical segment. Residues 985–990 (TSYWTW) are Cytoplasmic-facing. Residues 991–1011 (FSHIAIWGSIALWVVFFGIYS) form a helical membrane-spanning segment. The Extracellular segment spans residues 1012 to 1029 (SLWPAVPMAPDMSGEAAM). A helical membrane pass occupies residues 1030–1055 (LFSSGVFWMGLLFIPVASLLLDVVYK). Over 1056-1149 (VIKRTAFKTL…DTTKQRPDEW (94 aa)) the chain is Cytoplasmic. 1080–1087 (GAVVLGKS) contacts ATP. Ser-1111 carries the post-translational modification Phosphoserine.

The protein belongs to the cation transport ATPase (P-type) (TC 3.A.3) family. Type IV subfamily. Component of a P4-ATPase flippase complex which consists of a catalytic alpha subunit and an accessory beta subunit. Interacts with TMEM30A to form a flippase complex; this complex forms an intermediate phosphoenzyme. Interacts with TMEM30B; this interaction is reported conflictingly. Mg(2+) is required as a cofactor. Post-translationally, cleaved by calpain in a caspase- and calcium influx-dependent manner during platelet apoptosis leading to a 100 kDa polypeptide. As to expression, kidney.

The protein localises to the cytoplasmic vesicle. It is found in the secretory vesicle. Its subcellular location is the chromaffin granule membrane. It localises to the cytoplasmic granule. The protein resides in the cell membrane. The protein localises to the endoplasmic reticulum. It is found in the golgi apparatus. The catalysed reaction is ATP + H2O + phospholipidSide 1 = ADP + phosphate + phospholipidSide 2.. It carries out the reaction a 1,2-diacyl-sn-glycero-3-phospho-L-serine(out) + ATP + H2O = a 1,2-diacyl-sn-glycero-3-phospho-L-serine(in) + ADP + phosphate + H(+). Its function is as follows. Catalytic component of a P4-ATPase flippase complex which catalyzes the hydrolysis of ATP coupled to the transport of aminophospholipids from the outer to the inner leaflet of various membranes and ensures the maintenance of asymmetric distribution of phospholipids. Phospholipid translocation also seems to be implicated in vesicle formation and in uptake of lipid signaling molecules. In vitro, its ATPase activity is selectively and stereospecifically stimulated by phosphatidylserine (PS). The flippase complex ATP8A1:TMEM30A seems to play a role in regulation of cell migration probably involving flippase-mediated translocation of phosphatidylethanolamine (PE) at the cell membrane. Acts as aminophospholipid translocase at the cell membrane in neuronal cells. In Bos taurus (Bovine), this protein is Probable phospholipid-transporting ATPase IA.